A 1136-amino-acid polypeptide reads, in one-letter code: Probable phospholipid-transporting ATPase IIB (1136 aa).

The Cytoplasmic portion of the chain corresponds to 1 to 145; the sequence is MADQIPLYPV…IKNQKYNIFT (145 aa). Residues 146-166 form a helical membrane-spanning segment; the sequence is FIPGVLYEQFKFFLNLYFLIV. Residues 167-174 are Extracellular-facing; sequence SCSQFVPA. A helical transmembrane segment spans residues 175 to 195; it reads LKIGYLYTYWAPLGFVLAVTI. Topologically, residues 196–383 are cytoplasmic; that stretch reads MREAVDEFRR…LDLELNQLTK (188 aa). The helical transmembrane segment at 384–404 threads the bilayer; the sequence is ALFLALVALSVVMVTLQGFAG. Residues 405–408 lie on the Extracellular side of the membrane; sequence PWYR. Residues 409–429 form a helical membrane-spanning segment; sequence SLFRFLLLFSYIIPISLRVNL. Topologically, residues 430-939 are cytoplasmic; the sequence is DMGKAAYGWM…ALGQFVMHRG (510 aa). Catalysis depends on aspartate 469, which acts as the 4-aspartylphosphate intermediate. 3 residues coordinate ATP: aspartate 469, lysine 470, and threonine 471. Aspartate 469 serves as a coordination point for Mg(2+). Residue threonine 471 participates in Mg(2+) binding. The segment at 514-538 is disordered; the sequence is AGGSSAASTPPRKAPSSAPKVRRSV. ATP contacts are provided by glutamate 591, phenylalanine 633, lysine 638, lysine 657, arginine 686, threonine 687, threonine 766, glycine 767, aspartate 768, arginine 848, and lysine 854. Aspartate 874 contacts Mg(2+). ATP-binding residues include asparagine 877 and aspartate 878. A Mg(2+)-binding site is contributed by aspartate 878. The chain crosses the membrane as a helical span at residues 940–960; that stretch reads LIISTMQAVFSSVFYFASVPL. Residues 961–962 lie on the Extracellular side of the membrane; it reads YQ. A helical transmembrane segment spans residues 963–983; that stretch reads GFLMVGYATVYTMFPVFSLVL. Residues 984-1012 are Cytoplasmic-facing; it reads DQDVKPEMAMLYPELYKDLTKGRSLSFKT. A helical transmembrane segment spans residues 1013-1033; sequence FLVWVLISIYQGGILMFGALV. Residues 1034–1041 are Extracellular-facing; sequence LFESEFVH. The chain crosses the membrane as a helical span at residues 1042–1062; the sequence is VVAISFTALVLTELLMVALTV. Residues 1063–1066 are Cytoplasmic-facing; it reads RTWH. A helical transmembrane segment spans residues 1067 to 1087; that stretch reads WLMVVAQLLSLGCYVASLAFL. Residues 1088–1098 lie on the Extracellular side of the membrane; the sequence is NEYFDVAFITT. Residues 1099 to 1119 traverse the membrane as a helical segment; that stretch reads VTFVWKVSAITVVSCLPLYVL. Topologically, residues 1120–1136 are cytoplasmic; it reads KYLKRKLSPPSYSKLSS.

This sequence belongs to the cation transport ATPase (P-type) (TC 3.A.3) family. Type IV subfamily. It depends on Mg(2+) as a cofactor.

The protein resides in the golgi apparatus. It is found in the trans-Golgi network membrane. It catalyses the reaction ATP + H2O + phospholipidSide 1 = ADP + phosphate + phospholipidSide 2.. The chain is Probable phospholipid-transporting ATPase IIB (ATP9B) from Bos taurus (Bovine).